The following is a 165-amino-acid chain: Shikimate kinase (165 aa).

Residue 11–16 (GAGKTT) coordinates ATP. Thr15 is a Mg(2+) binding site. Residues Asp33, Arg57, and Gly78 each coordinate substrate. Arg116 is a binding site for ATP. A substrate-binding site is contributed by Arg134.

The protein belongs to the shikimate kinase family. In terms of assembly, monomer. Requires Mg(2+) as cofactor.

It is found in the cytoplasm. The enzyme catalyses shikimate + ATP = 3-phosphoshikimate + ADP + H(+). It participates in metabolic intermediate biosynthesis; chorismate biosynthesis; chorismate from D-erythrose 4-phosphate and phosphoenolpyruvate: step 5/7. Its function is as follows. Catalyzes the specific phosphorylation of the 3-hydroxyl group of shikimic acid using ATP as a cosubstrate. The protein is Shikimate kinase of Bacillus cereus (strain AH187).